We begin with the raw amino-acid sequence, 420 residues long: S-adenosylmethionine synthase (420 aa).

An ATP-binding site is contributed by His16. Asp18 serves as a coordination point for Mg(2+). Position 44 (Glu44) interacts with K(+). Residues Glu57 and Gln100 each contribute to the L-methionine site. The segment at 100–110 is flexible loop; it reads QSPDIAQGVNT. ATP contacts are provided by residues 175–177, 251–252, Asp260, 266–267, Ala283, and Lys287; these read DGK, KF, and RK. Asp260 serves as a coordination point for L-methionine. L-methionine is bound at residue Lys291.

It belongs to the AdoMet synthase family. As to quaternary structure, homotetramer; dimer of dimers. Requires Mg(2+) as cofactor. It depends on K(+) as a cofactor.

It is found in the cytoplasm. It carries out the reaction L-methionine + ATP + H2O = S-adenosyl-L-methionine + phosphate + diphosphate. It functions in the pathway amino-acid biosynthesis; S-adenosyl-L-methionine biosynthesis; S-adenosyl-L-methionine from L-methionine: step 1/1. Catalyzes the formation of S-adenosylmethionine (AdoMet) from methionine and ATP. The overall synthetic reaction is composed of two sequential steps, AdoMet formation and the subsequent tripolyphosphate hydrolysis which occurs prior to release of AdoMet from the enzyme. In Trichormus variabilis (strain ATCC 29413 / PCC 7937) (Anabaena variabilis), this protein is S-adenosylmethionine synthase.